The sequence spans 196 residues: MEYDNFFIKILESLINDKITLKRQISVNIPDTDNIFGNSDLTTTLWTSQFQCPQKFHHKFFDAIKDSRGINWIRADSFIEILGFKNKPKKVLKKYVSKRYKCYLIDIDSPVKKNLIDTVFKPKTIFIRYEGLLQLISQSNNPKSVKLWEHIAQIILPNNYHKNPVNQASILQRDNRQLVIRHIEEDIYELEDDIRN.

Positions 58-163 (HKFFDAIKDS…IILPNNYHKN (106 aa)) constitute a Bro-N domain.

This is an uncharacterized protein from Acanthamoeba polyphaga mimivirus (APMV).